The primary structure comprises 143 residues: uncharacterized protein (143 aa).

The signal sequence occupies residues 1–27 (MSDEIARLVADVFELAGLLRRSGEVVA).

This is an uncharacterized protein from Mycobacterium tuberculosis (strain CDC 1551 / Oshkosh).